The chain runs to 347 residues: Ultraviolet-sensitive opsin (347 aa).

Residues M1–A37 lie on the Extracellular side of the membrane. The N-linked (GlcNAc...) asparagine glycan is linked to N12. The helical transmembrane segment at F38–I58 threads the bilayer. The Cytoplasmic portion of the chain corresponds to K59–Y69. A helical membrane pass occupies residues I70–F90. Residues V91–A106 lie on the Extracellular side of the membrane. A disulfide bond links C105 and C182. The chain crosses the membrane as a helical span at residues F107–A127. The Cytoplasmic portion of the chain corresponds to F128–H147. Residues A148–F168 form a helical membrane-spanning segment. Topologically, residues G169–Y197 are extracellular. Residues Y198–Y218 form a helical membrane-spanning segment. The Cytoplasmic portion of the chain corresponds to S219–R247. Residues M248–M268 traverse the membrane as a helical segment. Topologically, residues Y269 to L282 are extracellular. Residues V283–F303 form a helical membrane-spanning segment. K291 carries the post-translational modification N6-(retinylidene)lysine. At M304–S347 the chain is on the cytoplasmic side. C317 is lipidated: S-palmitoyl cysteine. Residues D324–S347 form a disordered region. A compositionally biased stretch (low complexity) spans S328–S347.

Belongs to the G-protein coupled receptor 1 family. Opsin subfamily. Phosphorylated on some or all of the serine and threonine residues present in the C-terminal region. In terms of tissue distribution, cone photoreceptor cells.

The protein resides in the membrane. Its function is as follows. Visual pigments are the light-absorbing molecules that mediate vision. They consist of an apoprotein, opsin, covalently linked to cis-retinal. In Melopsittacus undulatus (Budgerigar), this protein is Ultraviolet-sensitive opsin.